A 196-amino-acid chain; its full sequence is Large ribosomal subunit protein bL25 (196 aa).

Belongs to the bacterial ribosomal protein bL25 family. CTC subfamily. Part of the 50S ribosomal subunit; part of the 5S rRNA/L5/L18/L25 subcomplex. Contacts the 5S rRNA. Binds to the 5S rRNA independently of L5 and L18.

Functionally, this is one of the proteins that binds to the 5S RNA in the ribosome where it forms part of the central protuberance. The sequence is that of Large ribosomal subunit protein bL25 from Bacteroides thetaiotaomicron (strain ATCC 29148 / DSM 2079 / JCM 5827 / CCUG 10774 / NCTC 10582 / VPI-5482 / E50).